The primary structure comprises 623 residues: Probable methyltransferase PMT8 (623 aa).

Residues 1–13 (MMRGRSDGGLKKR) are Cytoplasmic-facing. A helical; Signal-anchor for type II membrane protein membrane pass occupies residues 14–34 (LIASVCVVALFVCFLFMYYGS). Over 35–623 (SSQGASALEY…LTSESLRDSE (589 aa)) the chain is Lumenal. Residues asparagine 204, asparagine 350, and asparagine 588 are each glycosylated (N-linked (GlcNAc...) asparagine).

The protein belongs to the methyltransferase superfamily.

It is found in the golgi apparatus membrane. This chain is Probable methyltransferase PMT8, found in Arabidopsis thaliana (Mouse-ear cress).